Consider the following 264-residue polypeptide: 3-methyl-2-oxobutanoate hydroxymethyltransferase (264 aa).

Mg(2+)-binding residues include aspartate 45 and aspartate 84. 3-methyl-2-oxobutanoate is bound by residues 45–46 (DS), aspartate 84, and lysine 112. Glutamate 114 contributes to the Mg(2+) binding site. Catalysis depends on glutamate 181, which acts as the Proton acceptor.

Belongs to the PanB family. Homodecamer; pentamer of dimers. Mg(2+) is required as a cofactor.

It is found in the cytoplasm. It carries out the reaction 3-methyl-2-oxobutanoate + (6R)-5,10-methylene-5,6,7,8-tetrahydrofolate + H2O = 2-dehydropantoate + (6S)-5,6,7,8-tetrahydrofolate. It functions in the pathway cofactor biosynthesis; (R)-pantothenate biosynthesis; (R)-pantoate from 3-methyl-2-oxobutanoate: step 1/2. Its function is as follows. Catalyzes the reversible reaction in which hydroxymethyl group from 5,10-methylenetetrahydrofolate is transferred onto alpha-ketoisovalerate to form ketopantoate. The protein is 3-methyl-2-oxobutanoate hydroxymethyltransferase of Shewanella piezotolerans (strain WP3 / JCM 13877).